Here is a 661-residue protein sequence, read N- to C-terminus: B3 domain-containing protein Os12g0591400 (661 aa).

DNA-binding regions (TF-B3) lie at residues 2-95, 197-290, 437-535, and 562-658; these read GDQK…FNPS, KTRC…FNPS, LYIT…FKES, and TNLT…IRKG.

It localises to the nucleus. The protein is B3 domain-containing protein Os12g0591400 of Oryza sativa subsp. japonica (Rice).